We begin with the raw amino-acid sequence, 233 residues long: Large ribosomal subunit protein uL1 (233 aa).

This sequence belongs to the universal ribosomal protein uL1 family. Part of the 50S ribosomal subunit.

Functionally, binds directly to 23S rRNA. The L1 stalk is quite mobile in the ribosome, and is involved in E site tRNA release. Its function is as follows. Protein L1 is also a translational repressor protein, it controls the translation of the L11 operon by binding to its mRNA. The chain is Large ribosomal subunit protein uL1 from Shewanella putrefaciens (strain CN-32 / ATCC BAA-453).